The primary structure comprises 515 residues: 2-isopropylmalate synthase (515 aa).

A Pyruvate carboxyltransferase domain is found at 5–267 (VIIFDTTLRD…DTHINTQEIH (263 aa)). Residues Asp14, His202, His204, and Asn238 each coordinate Mn(2+). Residues 392–515 (VLDKLSAHST…VADIKNHKHH (124 aa)) form a regulatory domain region.

The protein belongs to the alpha-IPM synthase/homocitrate synthase family. LeuA type 1 subfamily. Homodimer. The cofactor is Mn(2+).

Its subcellular location is the cytoplasm. The catalysed reaction is 3-methyl-2-oxobutanoate + acetyl-CoA + H2O = (2S)-2-isopropylmalate + CoA + H(+). It functions in the pathway amino-acid biosynthesis; L-leucine biosynthesis; L-leucine from 3-methyl-2-oxobutanoate: step 1/4. Its function is as follows. Catalyzes the condensation of the acetyl group of acetyl-CoA with 3-methyl-2-oxobutanoate (2-ketoisovalerate) to form 3-carboxy-3-hydroxy-4-methylpentanoate (2-isopropylmalate). This chain is 2-isopropylmalate synthase, found in Haemophilus influenzae (strain ATCC 51907 / DSM 11121 / KW20 / Rd).